The chain runs to 414 residues: Protein MAK11 (414 aa).

At S2 the chain carries N-acetylserine. 6 WD repeats span residues 50–78 (AHSL…RIYD), 90–135 (SHQG…MVWR), 147–177 (GHTA…RLWN), 189–221 (LRKY…LIYE), 238–267 (LMHI…HFYP), and 298–330 (GHTN…VVWD). Residues S376 and S380 each carry the phosphoserine modification. Position 382 is a phosphothreonine (T382).

Associates with 60S pre-ribosomal particles.

The protein localises to the nucleus. Its subcellular location is the nucleolus. It localises to the nucleus membrane. Essential for cell growth. Plays a role in assembly of 60S pre-ribosomal particles in the nucleolus. Also required for replication of the M1 double-stranded RNA of the L-A virus. This latter function may reflect an enhanced requirement for free 60S ribosomal particles for the translation of viral mRNAs which lack poly-A tails. The protein is Protein MAK11 (MAK11) of Saccharomyces cerevisiae (strain ATCC 204508 / S288c) (Baker's yeast).